Here is a 538-residue protein sequence, read N- to C-terminus: Syncytin-1 (538 aa).

An N-terminal signal peptide occupies residues M1–T20. The Extracellular segment spans residues S31–Q443. N169 carries an N-linked (GlcNAc...) asparagine glycan. The CXXC motif lies at C186–C189. Intrachain disulfides connect C186–C189, C186–C405, and C397–C404. 5 N-linked (GlcNAc...) asparagine glycosylation sites follow: N208, N214, N234, N242, and N281. The segment at I320–I340 is fusion peptide. The immunosuppression stretch occupies residues L380–T396. The CX6CC motif lies at C397–C405. A glycan (N-linked (GlcNAc...) asparagine) is linked at N409. The helical transmembrane segment at W444 to F464 threads the bilayer. Residues G465–K484 form an essential for the fusiogenic function region. At G465–S538 the chain is on the cytoplasmic side. The segment at K494–S538 is disordered.

This sequence belongs to the gamma type-C retroviral envelope protein family. HERV class-I W env subfamily. The mature envelope protein (Env) consists of a trimer of SU-TM heterodimers attached probably by a labile interchain disulfide bond. Interacts with the C-type lectin CD209/DC-SIGN. In terms of processing, specific enzymatic cleavages in vivo yield mature proteins. Envelope glycoproteins are synthesized as an inactive precursor that is heavily N-glycosylated and processed likely by furin in the Golgi to yield the mature SU and TM proteins. The cleavage site between SU and TM requires the minimal sequence [KR]-X-[KR]-R. Post-translationally, the CXXC motif is highly conserved across a broad range of retroviral envelope proteins. It is thought to participate in the formation of a labile disulfide bond possibly with the CX6CC motif present in the transmembrane protein.

The protein localises to the cell membrane. It is found in the virion. Functionally, this endogenous retroviral envelope protein has retained its original fusogenic properties and participates in trophoblast fusion and the formation of a syncytium during placenta morphogenesis. May recognize and induce fusion through binding of SLC1A4 and SLC1A5. In terms of biological role, endogenous envelope proteins may have kept, lost or modified their original function during evolution. Retroviral envelope proteins mediate receptor recognition and membrane fusion during early infection. The surface protein (SU) mediates receptor recognition, while the transmembrane protein (TM) acts as a class I viral fusion protein. The protein may have at least 3 conformational states: pre-fusion native state, pre-hairpin intermediate state, and post-fusion hairpin state. During viral and target cell membrane fusion, the coiled coil regions (heptad repeats) assume a trimer-of-hairpins structure, positioning the fusion peptide in close proximity to the C-terminal region of the ectodomain. The formation of this structure appears to drive apposition and subsequent fusion of membranes. The sequence is that of Syncytin-1 (ERVW-1) from Hylobates pileatus (Pileated gibbon).